The chain runs to 488 residues: MAATLLRAKPKVTVSFEDVSVYFTKTEWRLLDLKQRTLYKQVMLENYSHLVSVGFAFSKPNLVSQLERGEKPWIRDDGMESAARSCAGNRIKTKTLTSKPKLFGRGLLRNTSRSSLQRRPHDFRPNPIVRYQHSRIADKRYLCQQCGKSFSRSFNLIKHRIIHSREKPYECSECGKQFQRSLALLEHQRIHSGDKPYECGECGKTFTRSSNLVKHQVIHSSEMPFVCRMCGKVFRRSFALLEHTRIHSGERPFECTECGKAFSRSSNLIEHQRIHSGQKPYICKECGKAFKGVSQLIHHQLIHRGDKPFTCHEYGKAFRGLSGLSQHQRVHRGEKPYECSECGRAFGRRANLFKHQVVHGGVRLQHRTRGKGFQRKLLEHLRDLHGQQPQEAGEGSSAEPQPIDTNEKPQVCERCGQVFENKLLLCRHLRIHDDEDDKKQKPVISSTSVLEDKSLLSQHLEAQPTEESDSEGSVVFVYAEKPHGPSSP.

A KRAB domain is found at 14 to 85 (VSFEDVSVYF…DDGMESAARS (72 aa)). C2H2-type zinc fingers lie at residues 141–163 (YLCQ…RIIH), 169–191 (YECS…QRIH), 197–219 (YECG…QVIH), 225–247 (FVCR…TRIH), 253–275 (FECT…QRIH), and 281–303 (YICK…QLIH). The C2H2-type 7; degenerate zinc-finger motif lies at 309–331 (FTCHEYGKAFRGLSGLSQHQRVH). The C2H2-type 8 zinc-finger motif lies at 337–359 (YECSECGRAFGRRANLFKHQVVH). Residues 387-408 (QQPQEAGEGSSAEPQPIDTNEK) form a disordered region. A C2H2-type 9 zinc finger spans residues 410–432 (QVCERCGQVFENKLLLCRHLRIH). The interval 435-488 (EDDKKQKPVISSTSVLEDKSLLSQHLEAQPTEESDSEGSVVFVYAEKPHGPSSP) is disordered.

This sequence belongs to the krueppel C2H2-type zinc-finger protein family. In terms of tissue distribution, highly expressed in pancreatic islets.

The protein resides in the nucleus. Functionally, KRAB domain-containing zinc-finger protein that represses B1/Alu SINE transposable elements and modulates the transcription of nearby genes in a tissue-specific manner. It regulates glucose homeostasis and lipid metabolism by modulating the expression of the endocrine cell-defining transcription factor, MAFB, in pancreatic islets and, the fat metabolism regulator, ACACB, in adipose tissue and muscle. This is Zinc finger protein 92 (Zfp92) from Mus musculus (Mouse).